A 237-amino-acid polypeptide reads, in one-letter code: tRNA (guanine-N(7)-)-methyltransferase (237 aa).

S-adenosyl-L-methionine contacts are provided by glutamate 67, glutamate 92, aspartate 119, and aspartate 141. Aspartate 141 is a catalytic residue. Substrate-binding positions include lysine 145, aspartate 177, and 214 to 217; that span reads TRYE.

This sequence belongs to the class I-like SAM-binding methyltransferase superfamily. TrmB family.

It catalyses the reaction guanosine(46) in tRNA + S-adenosyl-L-methionine = N(7)-methylguanosine(46) in tRNA + S-adenosyl-L-homocysteine. It participates in tRNA modification; N(7)-methylguanine-tRNA biosynthesis. In terms of biological role, catalyzes the formation of N(7)-methylguanine at position 46 (m7G46) in tRNA. The polypeptide is tRNA (guanine-N(7)-)-methyltransferase (Ruegeria pomeroyi (strain ATCC 700808 / DSM 15171 / DSS-3) (Silicibacter pomeroyi)).